Here is a 783-residue protein sequence, read N- to C-terminus: Probable phosphoketolase (783 aa).

It belongs to the XFP family. Requires thiamine diphosphate as cofactor.

The polypeptide is Probable phosphoketolase (Rhodopseudomonas palustris (strain ATCC BAA-98 / CGA009)).